The following is a 319-amino-acid chain: NADH-ubiquinone oxidoreductase chain 1 (319 aa).

The next 8 helical transmembrane spans lie at 5–25 (TINS…LTLM), 72–92 (LLIS…TPIP), 102–122 (LGLL…LWAG), 146–166 (VTLG…TMQL), 173–193 (FTWL…STLA), 225–245 (FFLT…ILFI), 254–274 (ELFL…FLWI), and 295–315 (LPLT…TSGI).

It belongs to the complex I subunit 1 family.

It localises to the mitochondrion inner membrane. The enzyme catalyses a ubiquinone + NADH + 5 H(+)(in) = a ubiquinol + NAD(+) + 4 H(+)(out). Its function is as follows. Core subunit of the mitochondrial membrane respiratory chain NADH dehydrogenase (Complex I) that is believed to belong to the minimal assembly required for catalysis. Complex I functions in the transfer of electrons from NADH to the respiratory chain. The immediate electron acceptor for the enzyme is believed to be ubiquinone. The chain is NADH-ubiquinone oxidoreductase chain 1 (MT-ND1) from Varanus flavescens (Yellow monitor).